Consider the following 427-residue polypeptide: NADPH-dependent stearoyl-CoA 9-desaturase (427 aa).

His-90, His-94, His-125, His-129, His-130, His-304, His-308, and His-309 together coordinate Fe cation.

This sequence belongs to the fatty acid desaturase type 1 family. Interacts with the electron transfer protein Rv3230c to form a functional acyl-CoA desaturase complex. The cofactor is Fe(2+). Is rapidly degraded by a mycobacterial protein degradation system that specifically targets the residues LAA at the C-terminus, leading to a post-translational proteolytic regulation of DesA3 essential activity.

It is found in the cell membrane. The catalysed reaction is octadecanoyl-CoA + NADPH + O2 + H(+) = (9Z)-octadecenoyl-CoA + NADP(+) + 2 H2O. It participates in lipid metabolism; fatty acid metabolism. Functionally, is likely involved in the aerobic desaturation system responsible for the synthesis of oleic acid from stearoyl-CoA; oleic acid is a precursor of mycobacterial membrane phospholipids and triglycerides. Catalyzes the conversion of stearoyl-CoA to oleoyl-CoA by introduction of a cis double bond between carbons 9 and 10 of the acyl chain. Requires the electron transfer partner Rv3230c to pass two electrons from NADPH to its active site diiron center. Is also able to catalyze the 9-desaturation of palmitoyl-CoA to palmitoleoyl-CoA. This is NADPH-dependent stearoyl-CoA 9-desaturase (desA3) from Mycobacterium tuberculosis (strain CDC 1551 / Oshkosh).